Here is a 1883-residue protein sequence, read N- to C-terminus: Zinc finger protein 106 (1883 aa).

Residues I6 and K37 each participate in a glycyl lysine isopeptide (Lys-Gly) (interchain with G-Cter in SUMO2) cross-link. A C2H2-type 1; atypical zinc finger spans residues 20–44; it reads HECRVCGVTEVGLSAYAKHISGQLH. Positions 39–162 are disordered; sequence ISGQLHKDNV…NGGGPRGRSG (124 aa). Acidic residues predominate over residues 52-67; it reads EREDDGKGEEEEEDYF. Glycyl lysine isopeptide (Lys-Gly) (interchain with G-Cter in SUMO2) cross-links involve residues K69 and K76. Basic and acidic residues-rich tracts occupy residues 77 to 86, 96 to 116, and 128 to 138; these read QRKEQSRQDE, SDDR…DRES, and PQRDWKWEKDG. A Glycyl lysine isopeptide (Lys-Gly) (interchain with G-Cter in SUMO2) cross-link involves residue K133. Polar residues predominate over residues 139-148; that stretch reads FNNTRKNSFP. Residues K243, K287, and K305 each participate in a glycyl lysine isopeptide (Lys-Gly) (interchain with G-Cter in SUMO2) cross-link. Residues 322–338 are compositionally biased toward polar residues; it reads QTTKQADTATSKVSGKN. The interval 322–356 is disordered; the sequence is QTTKQADTATSKVSGKNGSAAREKPRRWTPYPSQK. Glycyl lysine isopeptide (Lys-Gly) (interchain with G-Cter in SUMO2) cross-links involve residues K356, K365, K371, and K417. A disordered region spans residues 389–423; the sequence is IQEPQTDETRNSPTQKTQKEIHTGSLNHKASSDSA. Over residues 412 to 423 the composition is skewed to polar residues; it reads GSLNHKASSDSA. Phosphoserine is present on S422. Glycyl lysine isopeptide (Lys-Gly) (interchain with G-Cter in SUMO2) cross-links involve residues K451, K461, K477, K492, K505, K515, K525, K539, and K557. Positions 457–501 are disordered; sequence CPATKSLSQKQDPKNISKNTKTNFFSPGEHSNPSNKPTVEDNHGP. Polar residues predominate over residues 461–493; sequence KSLSQKQDPKNISKNTKTNFFSPGEHSNPSNKP. The interval 586-637 is disordered; it reads LEDESDGETSDTEKHGTKIGTLGSATTELLSGSTRTADEKEEDDRILKTSRE. S590 carries the post-translational modification Phosphoserine. A Glycyl lysine isopeptide (Lys-Gly) (interchain with G-Cter in SUMO2) cross-link involves residue K603. Positions 608–620 are enriched in polar residues; it reads GSATTELLSGSTR. Phosphoserine occurs at positions 641 and 661. Residues K671, K684, K705, K721, K741, K775, and K807 each participate in a glycyl lysine isopeptide (Lys-Gly) (interchain with G-Cter in SUMO2) cross-link. Phosphoserine occurs at positions 859, 861, 864, and 893. Residues 879–945 are disordered; sequence EEGTGKENEP…HSAQLSSDHI (67 aa). Residues 888–906 are compositionally biased toward polar residues; that stretch reads PQQMVSPSNSLRAGQSQKA. Residues K905 and K911 each participate in a glycyl lysine isopeptide (Lys-Gly) (interchain with G-Cter in SUMO2) cross-link. S937 bears the Phosphoserine mark. Residue K953 forms a Glycyl lysine isopeptide (Lys-Gly) (interchain with G-Cter in SUMO2) linkage. Residues 958 to 976 show a composition bias toward polar residues; sequence QERSIPPSENQNSQESNGE. Disordered regions lie at residues 958–982, 997–1048, 1121–1140, and 1182–1218; these read QERS…CLSS, ATDS…KERS, EPSE…RRNS, and PTFQ…VPPS. T1021 carries the phosphothreonine modification. S1025, S1026, and S1031 each carry phosphoserine. Over residues 1035-1045 the composition is skewed to basic residues; that stretch reads KNKRRKIKGKK. S1249 is subject to Phosphoserine. The tract at residues 1252–1483 is disordered; that stretch reads ESTESFHEPS…EVSSTSEIGT (232 aa). Over residues 1255-1277 the composition is skewed to basic and acidic residues; sequence ESFHEPSQELKFSVEQRNTRNRE. A Glycyl lysine isopeptide (Lys-Gly) (interchain with G-Cter in SUMO2) cross-link involves residue K1265. 2 stretches are compositionally biased toward polar residues: residues 1278–1291 and 1299–1312; these read NSPS…SSIN and KGNS…SSFL. Residues S1279, S1281, and S1284 each carry the phosphoserine modification. K1299 participates in a covalent cross-link: Glycyl lysine isopeptide (Lys-Gly) (interchain with G-Cter in SUMO2). S1302 is subject to Phosphoserine. Residue K1324 forms a Glycyl lysine isopeptide (Lys-Gly) (interchain with G-Cter in SUMO2) linkage. S1328 bears the Phosphoserine mark. A compositionally biased stretch (polar residues) spans 1333-1346; sequence PEQQAESTLTSAET. Basic residues predominate over residues 1349-1362; the sequence is SKKKKKLRKKKSLR. The residue at position 1370 (S1370) is a Phosphoserine. Phosphothreonine is present on T1372. Residues K1380, K1392, and K1395 each participate in a glycyl lysine isopeptide (Lys-Gly) (interchain with G-Cter in SUMO2) cross-link. 2 stretches are compositionally biased toward basic and acidic residues: residues 1402–1416 and 1444–1456; these read EDSR…VRDE and GEEK…KKDI. A Glycyl lysine isopeptide (Lys-Gly) (interchain with G-Cter in SUMO2) cross-link involves residue K1454. The segment covering 1457–1481 has biased composition (polar residues); it reads WNSTEQNPLETSRSGCDEVSSTSEI. S1468 is subject to Phosphoserine. Glycyl lysine isopeptide (Lys-Gly) (interchain with G-Cter in SUMO2) cross-links involve residues K1486 and K1504. Over residues 1502–1513 the composition is skewed to polar residues; the sequence is SIKGSKNSSEIS. The interval 1502-1527 is disordered; sequence SIKGSKNSSEISSEPGDDDEPTEGSF. 6 WD repeats span residues 1529 to 1568, 1570 to 1611, 1654 to 1695, 1698 to 1737, 1738 to 1775, and 1778 to 1815; these read GHQA…GVFE, HTSK…CVEQ, HGPR…LLRT, GHSK…RIYK, GHNH…RLQV, and GHKD…NYRC. A Glycyl lysine isopeptide (Lys-Gly) (interchain with G-Cter in SUMO2) cross-link involves residue K1585. K1737 participates in a covalent cross-link: Glycyl lysine isopeptide (Lys-Gly) (interchain with G-Cter in SUMO2). A C2H2-type 2; atypical zinc finger spans residues 1813 to 1838; sequence YRCWWHGCSLIFGVVDHLKQHLLTDH. K1864 participates in a covalent cross-link: Glycyl lysine isopeptide (Lys-Gly) (interchain with G-Cter in SUMO2).

As to quaternary structure, interacts with KNOP1. Interacts with TARDBP and NUP107. Interacts (via N-terminus) with RBM39. Interacts with the SH3 domains of FYN and GRB2. Post-translationally, phosphorylated by FYN in vitro.

The protein localises to the nucleus. The protein resides in the nucleolus. Its subcellular location is the nucleus speckle. Functionally, RNA-binding protein. Specifically binds to 5'-GGGGCC-3' sequence repeats in RNA. Essential for maintenance of peripheral motor neuron and skeletal muscle function. Required for normal expression and/or alternative splicing of a number of genes in spinal cord and skeletal muscle, including the neurite outgrowth inhibitor RTN4. Also contributes to normal mitochondrial respiratory function in motor neurons, via an unknown mechanism. This chain is Zinc finger protein 106 (ZNF106), found in Homo sapiens (Human).